We begin with the raw amino-acid sequence, 85 residues long: Small ribosomal subunit protein uS17 (85 aa).

This sequence belongs to the universal ribosomal protein uS17 family. Part of the 30S ribosomal subunit.

Functionally, one of the primary rRNA binding proteins, it binds specifically to the 5'-end of 16S ribosomal RNA. This chain is Small ribosomal subunit protein uS17, found in Desulforapulum autotrophicum (strain ATCC 43914 / DSM 3382 / VKM B-1955 / HRM2) (Desulfobacterium autotrophicum).